The chain runs to 262 residues: Phosphonates import ATP-binding protein PhnC (262 aa).

The region spanning 5 to 253 (IRVEKLAKTF…RFDHLYRSIN (249 aa)) is the ABC transporter domain. 37-44 (GPSGSGKS) serves as a coordination point for ATP.

This sequence belongs to the ABC transporter superfamily. Phosphonates importer (TC 3.A.1.9.1) family. In terms of assembly, the complex is composed of two ATP-binding proteins (PhnC), two transmembrane proteins (PhnE) and a solute-binding protein (PhnD).

Its subcellular location is the cell inner membrane. The enzyme catalyses phosphonate(out) + ATP + H2O = phosphonate(in) + ADP + phosphate + H(+). Part of the ABC transporter complex PhnCDE involved in phosphonates import. Responsible for energy coupling to the transport system. The chain is Phosphonates import ATP-binding protein PhnC from Shigella dysenteriae serotype 1 (strain Sd197).